We begin with the raw amino-acid sequence, 185 residues long: Small ribosomal subunit protein uS7 (185 aa).

It belongs to the universal ribosomal protein uS7 family. Part of the 30S ribosomal subunit.

In terms of biological role, one of the primary rRNA binding proteins, it binds directly to 16S rRNA where it nucleates assembly of the head domain of the 30S subunit. Is located at the subunit interface close to the decoding center. In Methanosarcina barkeri (strain Fusaro / DSM 804), this protein is Small ribosomal subunit protein uS7.